Here is a 322-residue protein sequence, read N- to C-terminus: Ribose-phosphate pyrophosphokinase 1 (322 aa).

ATP-binding positions include 39 to 41 and 98 to 99; these read DGE and RQ. Mg(2+) contacts are provided by His132 and Asp173. Lys196 is an active-site residue. D-ribose 5-phosphate-binding positions include Arg198, Asp224, and 228-232; that span reads DTAGT.

Belongs to the ribose-phosphate pyrophosphokinase family. Class I subfamily. In terms of assembly, homohexamer. Mg(2+) serves as cofactor.

Its subcellular location is the cytoplasm. The catalysed reaction is D-ribose 5-phosphate + ATP = 5-phospho-alpha-D-ribose 1-diphosphate + AMP + H(+). Its pathway is metabolic intermediate biosynthesis; 5-phospho-alpha-D-ribose 1-diphosphate biosynthesis; 5-phospho-alpha-D-ribose 1-diphosphate from D-ribose 5-phosphate (route I): step 1/1. Its function is as follows. Involved in the biosynthesis of the central metabolite phospho-alpha-D-ribosyl-1-pyrophosphate (PRPP) via the transfer of pyrophosphoryl group from ATP to 1-hydroxyl of ribose-5-phosphate (Rib-5-P). This chain is Ribose-phosphate pyrophosphokinase 1, found in Streptococcus pneumoniae serotype 4 (strain ATCC BAA-334 / TIGR4).